The primary structure comprises 202 residues: Small ribosomal subunit protein uS4c (202 aa).

The S4 RNA-binding domain maps to 90 to 151 (MRLDNTIFRL…KQKSRFIITK (62 aa)).

This sequence belongs to the universal ribosomal protein uS4 family. As to quaternary structure, part of the 30S ribosomal subunit. Contacts protein S5. The interaction surface between S4 and S5 is involved in control of translational fidelity.

The protein localises to the plastid. Its subcellular location is the chloroplast. Its function is as follows. One of the primary rRNA binding proteins, it binds directly to 16S rRNA where it nucleates assembly of the body of the 30S subunit. Functionally, with S5 and S12 plays an important role in translational accuracy. The polypeptide is Small ribosomal subunit protein uS4c (rps4) (Plagiochila adianthoides (Liverwort)).